A 408-amino-acid polypeptide reads, in one-letter code: uncharacterized protein (408 aa).

4Fe-4S ferredoxin-type domains lie at 42–72 (IPPIVKFPEKCISCEGCKESCPAFAIEMIYN), 78–107 (KLPVIDEGSCVACANCIEVCPTGVLEMDKH), 122–151 (SNLIIDEEVCVRCGNCERACPINVIERKEG), 151–181 (GKYVINMALCISCKECIKVCPIENAIVVVDE), 212–241 (KIPHIVSGLCVSCGICKDVCVGEIDLNEKK), 233–265 (GEIDLNEKKVVECVKCGLCIEVCSTTAIRIYKP), 273–302 (ICYVIDEDLCIGCRICQKVCGSGAIKISKE), and 304–333 (KLPYIVPELCVRGGACARECPVGAIKVVKP). [4Fe-4S] cluster is bound by residues cysteine 52, cysteine 55, cysteine 58, cysteine 62, cysteine 87, cysteine 90, cysteine 93, cysteine 97, cysteine 131, cysteine 134, cysteine 137, cysteine 141, cysteine 160, cysteine 163, cysteine 166, and cysteine 170. The [4Fe-4S] cluster site is built by cysteine 282, cysteine 285, cysteine 288, and cysteine 292.

This is an uncharacterized protein from Methanocaldococcus jannaschii (strain ATCC 43067 / DSM 2661 / JAL-1 / JCM 10045 / NBRC 100440) (Methanococcus jannaschii).